The primary structure comprises 640 residues: Chaperone protein HtpG (640 aa).

The interval 1-343 (MQTAENIEHL…SSDLPLNVSR (343 aa)) is a; substrate-binding. The segment at 344–564 (EILQESKDID…THDVSGNLGR (221 aa)) is b. Residues 565 to 640 (LLKSAGQKVP…LLLQNILSGK (76 aa)) form a c region.

The protein belongs to the heat shock protein 90 family. Homodimer.

The protein resides in the cytoplasm. Its function is as follows. Molecular chaperone. Has ATPase activity. The protein is Chaperone protein HtpG of Nitrosomonas europaea (strain ATCC 19718 / CIP 103999 / KCTC 2705 / NBRC 14298).